Here is a 469-residue protein sequence, read N- to C-terminus: Glutamate--tRNA ligase (469 aa).

The short motif at 11 to 21 (PSPTGFIHLGN) is the 'HIGH' region element. A compositionally biased stretch (basic and acidic residues) spans 116-131 (ASGEKPRYDGTWRPEP). The segment at 116–139 (ASGEKPRYDGTWRPEPGKVLPTPP) is disordered. The 'KMSKS' region signature appears at 243-247 (KMSKR). Lys-246 contacts ATP.

It belongs to the class-I aminoacyl-tRNA synthetase family. Glutamate--tRNA ligase type 1 subfamily. Monomer.

It is found in the cytoplasm. It catalyses the reaction tRNA(Glu) + L-glutamate + ATP = L-glutamyl-tRNA(Glu) + AMP + diphosphate. Its function is as follows. Catalyzes the attachment of glutamate to tRNA(Glu) in a two-step reaction: glutamate is first activated by ATP to form Glu-AMP and then transferred to the acceptor end of tRNA(Glu). The chain is Glutamate--tRNA ligase from Paraburkholderia phymatum (strain DSM 17167 / CIP 108236 / LMG 21445 / STM815) (Burkholderia phymatum).